Consider the following 317-residue polypeptide: Ribosomal RNA small subunit methyltransferase H (317 aa).

S-adenosyl-L-methionine is bound by residues 39–41 (GGH), Asp59, Phe83, Asp104, and Gln111.

It belongs to the methyltransferase superfamily. RsmH family.

It localises to the cytoplasm. It catalyses the reaction cytidine(1402) in 16S rRNA + S-adenosyl-L-methionine = N(4)-methylcytidine(1402) in 16S rRNA + S-adenosyl-L-homocysteine + H(+). In terms of biological role, specifically methylates the N4 position of cytidine in position 1402 (C1402) of 16S rRNA. The polypeptide is Ribosomal RNA small subunit methyltransferase H (Paraburkholderia phymatum (strain DSM 17167 / CIP 108236 / LMG 21445 / STM815) (Burkholderia phymatum)).